We begin with the raw amino-acid sequence, 864 residues long: DNA mismatch repair protein MutS (864 aa).

607–614 provides a ligand contact to ATP; it reads GPNMGGKS.

This sequence belongs to the DNA mismatch repair MutS family.

This protein is involved in the repair of mismatches in DNA. It is possible that it carries out the mismatch recognition step. This protein has a weak ATPase activity. The polypeptide is DNA mismatch repair protein MutS (Neisseria gonorrhoeae (strain NCCP11945)).